The chain runs to 454 residues: tRNA modification GTPase MnmE (454 aa).

(6S)-5-formyl-5,6,7,8-tetrahydrofolate is bound by residues R23, E80, and K120. Residues 216 to 377 (GMKVVIAGRP…LRNHLKQSMG (162 aa)) form the TrmE-type G domain. A K(+)-binding site is contributed by N226. GTP is bound by residues 226–231 (NAGKSS), 245–251 (TDIAGTT), 270–273 (DTAG), 335–338 (NKAD), and 358–360 (SAR). S230 is a Mg(2+) binding site. Positions 245, 247, and 250 each coordinate K(+). T251 lines the Mg(2+) pocket. (6S)-5-formyl-5,6,7,8-tetrahydrofolate is bound at residue K454.

The protein belongs to the TRAFAC class TrmE-Era-EngA-EngB-Septin-like GTPase superfamily. TrmE GTPase family. In terms of assembly, homodimer. Heterotetramer of two MnmE and two MnmG subunits. Requires K(+) as cofactor.

The protein resides in the cytoplasm. Functionally, exhibits a very high intrinsic GTPase hydrolysis rate. Involved in the addition of a carboxymethylaminomethyl (cmnm) group at the wobble position (U34) of certain tRNAs, forming tRNA-cmnm(5)s(2)U34. This is tRNA modification GTPase MnmE from Escherichia coli O7:K1 (strain IAI39 / ExPEC).